Reading from the N-terminus, the 558-residue chain is Two-component response regulator-like APRR5 (558 aa).

One can recognise a Response regulatory domain in the interval 51–169 (RVLLVEADDS…ELRNLWQHVW (119 aa)). The disordered stretch occupies residues 180–233 (FPWNESVGQQKAEGASANNSNGKRDDHVVSGNGGDAQSSCTRPEMEGESADVEV). Residues 240 to 260 (QMECAKSQFNETRLLANELQS) are a coiled coil. 2 disordered regions span residues 297–319 (SLRR…HPSS) and 535–558 (KKLA…TQAP). Positions 303 to 319 (ASENQSSGDRPSLHPSS) are enriched in polar residues. Residues 509–551 (REAALTKFRMKRKDRCYEKKVRYESRKKLAEQRPRIKGQFVRQ) enclose the CCT domain.

It belongs to the ARR-like family. In terms of assembly, interacts with ADO1 and ADO2. Interacts with SPY (via N-terminus). Post-translationally, phosphorylation varies throughout the diurnal cycle and enhances ADO1 binding. In terms of processing, O-fucosylated by SPY. O-fucosylation promotes APRR5 proteolysis.

The protein localises to the nucleus. Its function is as follows. Transcriptional repressor of CCA1 and LHY, thereby controlling photoperiodic flowering response. Involved in the positive and negative feedback loops of the circadian clock. With RVE8, forms a negative feedback loop of the circadian clock. Expression of several members of the ARR-like family is controlled by circadian rhythm. Proteolytic substrate of the E3 ubiquitin ligase SCF(ADO1) complex. APRR9, APRR7, and APRR5 coordinately act on the upstream region of the target genes to repress their expression from noon until midnight. The particular coordinated sequential expression of APRR9, APRR7, APRR5, APRR3 and APPR1 result to circadian waves that may be at the basis of the endogenous circadian clock. Negative regulator of shade avoidance response. Involved in the inhibition of leaf expansion in shade avoidance response. This chain is Two-component response regulator-like APRR5 (APRR5), found in Arabidopsis thaliana (Mouse-ear cress).